The chain runs to 563 residues: Putative cysteine ligase BshC (563 aa).

Residues 474 to 506 (LEQSLMGTSKQAEKALDTLRQKTQRANRRKHDE) adopt a coiled-coil conformation.

Belongs to the BshC family.

The chain is Putative cysteine ligase BshC from Prosthecochloris aestuarii (strain DSM 271 / SK 413).